The following is a 126-amino-acid chain: Holo-[acyl-carrier-protein] synthase (126 aa).

2 residues coordinate Mg(2+): Asp9 and Glu58.

Belongs to the P-Pant transferase superfamily. AcpS family. The cofactor is Mg(2+).

It localises to the cytoplasm. It catalyses the reaction apo-[ACP] + CoA = holo-[ACP] + adenosine 3',5'-bisphosphate + H(+). In terms of biological role, transfers the 4'-phosphopantetheine moiety from coenzyme A to a Ser of acyl-carrier-protein. The sequence is that of Holo-[acyl-carrier-protein] synthase from Escherichia coli O139:H28 (strain E24377A / ETEC).